A 355-amino-acid chain; its full sequence is IgG receptor FcRn large subunit p51 (355 aa).

Positions 1 to 24 (MRVPRSQPWGLALLLLLLPGTLRA) are cleaved as a signal peptide. The segment at 25-111 (AESHRSLLYH…ALKVFGDRDS (87 aa)) is alpha-1. Residues 25 to 300 (AESHRSLLYH…LESPAKSSVP (276 aa)) lie on the Extracellular side of the membrane. Positions 112-201 (YTLQGLLGCE…ERGRGNLEWK (90 aa)) are alpha-2. Residue asparagine 126 is glycosylated (N-linked (GlcNAc...) asparagine). Residues 202 to 291 (EPPSMRLKAR…GPAQPLTVEL (90 aa)) are alpha-3. Residues 203–292 (PPSMRLKARP…PAQPLTVELE (90 aa)) form the Ig-like C1-type domain. A disulfide bridge links cysteine 222 with cysteine 276. Positions 293–298 (SPAKSS) are connecting peptide. A helical membrane pass occupies residues 301–321 (VIGISIGFLLLMTVAAGGALL). Residues 322–355 (WRRRKGLPAPWIAFRGDDIGALLPTPGLSKDAES) are Cytoplasmic-facing.

The protein belongs to the immunoglobulin superfamily. In terms of assembly, fcRn complex consists of two subunits: p51, and p14 which is equivalent to beta-2-microglobulin. It forms an MHC class I-like heterodimer. Interacts with albumin/ALB; this interaction regulates ALB homeostasis. In terms of tissue distribution, expressed in liver and mammary gland of non-lactating animals. Expressed in hepatocytes and in epithelial cells of portal bile ductuli. Not expressed in the brances of portal veins or hepatic arteries. Expressed in the epithelial cells of the acini and ducti in the mammary gland with expression emphasized at the apical side. Not expressed in blood vessels of mammary gland.

It localises to the cell membrane. It is found in the endosome membrane. Functionally, cell surface receptor that transfers passive humoral immunity from the mother to the newborn. Binds to the Fc region of monomeric immunoglobulin gamma and mediates its selective uptake from milk. IgG in the milk is bound at the apical surface of the intestinal epithelium. The resultant FcRn-IgG complexes are transcytosed across the intestinal epithelium and IgG is released from FcRn into blood or tissue fluids. Throughout life, contributes to effective humoral immunity by recycling IgG and extending its half-life in the circulation. Mechanistically, monomeric IgG binding to FcRn in acidic endosomes of endothelial and hematopoietic cells recycles IgG to the cell surface where it is released into the circulation. In addition of IgG, regulates homeostasis of the other most abundant circulating protein albumin/ALB. The polypeptide is IgG receptor FcRn large subunit p51 (Camelus dromedarius (Dromedary)).